A 472-amino-acid polypeptide reads, in one-letter code: Methanethiol oxidase (472 aa).

A2 is subject to N-acetylalanine. Phosphoserine is present on residues S111, S371, and S467.

This sequence belongs to the selenium-binding protein family. In terms of assembly, interacts with USP33. In terms of processing, the N-terminus is blocked.

The protein localises to the nucleus. It is found in the cytoplasm. It localises to the cytosol. The protein resides in the membrane. It catalyses the reaction methanethiol + O2 + H2O = hydrogen sulfide + formaldehyde + H2O2 + H(+). Its pathway is organosulfur degradation. Its function is as follows. Catalyzes the oxidation of methanethiol, an organosulfur compound known to be produced in substantial amounts by gut bacteria. Selenium-binding protein which may be involved in the sensing of reactive xenobiotics in the cytoplasm. May be involved in intra-Golgi protein transport. The protein is Methanethiol oxidase (SELENBP1) of Pongo abelii (Sumatran orangutan).